The chain runs to 688 residues: PHD finger protein 21A (688 aa).

Lysine 65 is covalently cross-linked (Glycyl lysine isopeptide (Lys-Gly) (interchain with G-Cter in SUMO2)). 2 disordered regions span residues serine 78 to serine 127 and proline 327 to glutamine 373. A compositionally biased stretch (low complexity) spans glutamine 85–serine 127. Over residues serine 336–glutamate 354 the composition is skewed to basic and acidic residues. The segment at residues threonine 434 to valine 446 is a DNA-binding region (a.T hook). The interval phenylalanine 449–glutamate 471 is disordered. Threonine 453 carries the post-translational modification Phosphothreonine. Serine 456 carries the post-translational modification Phosphoserine. The PHD-type zinc finger occupies glutamate 497–glutamine 544. Positions lysine 571 to methionine 609 form a coiled coil. Positions glycine 650–lysine 688 are disordered. The segment covering proline 660–alanine 679 has biased composition (low complexity).

As to quaternary structure, component of a BHC histone deacetylase complex that contains HDAC1, HDAC2, HMG20B/BRAF35, KDM1A, RCOR1/CoREST and PHF21A/BHC80. The BHC complex may also contain ZMYM2, ZNF217, ZMYM3, GSE1 and GTF2I. In the complex, it interacts directly with HDAC1, HDAC2, HMG20B/BRAF35, KDM1A and RCOR1/CoREST. As to expression, expressed in the brain and testis. Weakly or not expressed in other tissues tested. Localized throughout the central nervous system (CNS) in brain, including the cerebellum, hippocampus, and cortex. Notably present in neuronal cells of granular cell layer and dentate gyrus in cerebellum and hippocampus, respectively. In the seminiferous tubules, the signals it is present strongly in spermatocytes, and weakly in spermatogonia and round spermatids. In some cases, it is also observed solely in spermatocytes (at protein level).

It localises to the nucleus. Its function is as follows. Component of the BHC complex, a corepressor complex that represses transcription of neuron-specific genes in non-neuronal cells. The BHC complex is recruited at RE1/NRSE sites by REST and acts by deacetylating and demethylating specific sites on histones, thereby acting as a chromatin modifier. In the BHC complex, it may act as a scaffold. Inhibits KDM1A-mediated demethylation of 'Lys-4' of histone H3 in vitro, suggesting a role in demethylation regulation. The polypeptide is PHD finger protein 21A (Mus musculus (Mouse)).